The sequence spans 521 residues: Probable protein kinase UbiB (521 aa).

One can recognise a Protein kinase domain in the interval S119–A497. ATP contacts are provided by residues V125–V133 and K151. The active-site Proton acceptor is D286. Residues Q496–V516 form a helical membrane-spanning segment.

The protein belongs to the ABC1 family. UbiB subfamily.

It is found in the cell inner membrane. Its pathway is cofactor biosynthesis; ubiquinone biosynthesis [regulation]. Its function is as follows. Is probably a protein kinase regulator of UbiI activity which is involved in aerobic coenzyme Q (ubiquinone) biosynthesis. In Delftia acidovorans (strain DSM 14801 / SPH-1), this protein is Probable protein kinase UbiB.